The primary structure comprises 147 residues: Deoxyuridine 5'-triphosphate nucleotidohydrolase (147 aa).

R24 contacts Mg(2+). DUTP is bound by residues 68–70 (PRS), 82–85 (GVID), Y88, G93, I95, and R111.

This sequence belongs to the dUTPase family. It depends on Mg(2+) as a cofactor.

It catalyses the reaction dUTP + H2O = dUMP + diphosphate + H(+). This enzyme is involved in nucleotide metabolism: it produces dUMP, the immediate precursor of thymidine nucleotides and it decreases the intracellular concentration of dUTP so that uracil cannot be incorporated into DNA. The sequence is that of Deoxyuridine 5'-triphosphate nucleotidohydrolase (OPG046) from Camelus.